The sequence spans 653 residues: Sulfate transporter 1.2 (653 aa).

Residues 1 to 30 (MSSRAHPVDGSPATDGGHVPMKPSPTRHKV) are disordered. At 1-91 (MSSRAHPVDG…GRNYTFKKFR (91 aa)) the chain is on the cytoplasmic side. A helical transmembrane segment spans residues 92–112 (GDLISGLTIASLCIPQDIGYA). The Extracellular portion of the chain corresponds to 113–116 (KLAN). A helical transmembrane segment spans residues 117–137 (LDPKYGLYSSFVPPLVYACMG). The Cytoplasmic portion of the chain corresponds to 138–141 (SSRD). The chain crosses the membrane as a helical span at residues 142–162 (IAIGPVAVVSLLLGTLLRAEI). Residues 163 to 173 (DPNTSPDEYLR) are Extracellular-facing. 2 helical membrane passes run 174–194 (LAFTATFFAGITEAALGFFRL) and 195–215 (GFLIDFLSHAAVVGFMGGAAI). Over 216-253 (TIALQQLKGFLGIKKFTKKTDIISVLESVFKAAHHGWN) the chain is Extracellular. A helical membrane pass occupies residues 254–274 (WQTILIGASFLTFLLTSKIIG). Topologically, residues 275 to 280 (KKSKKL) are cytoplasmic. The chain crosses the membrane as a helical span at residues 281 to 301 (FWVPAIAPLISVIVSTFFVYI). Residues 302 to 339 (TRADKQGVQIVKHLDQGINPSSFHLIYFTGDNLAKGIR) lie on the Extracellular side of the membrane. The helical transmembrane segment at 340-360 (IGVVAGMVALTEAVAIGRTFA) threads the bilayer. The Cytoplasmic portion of the chain corresponds to 361 to 372 (AMKDYQIDGNKE). A helical transmembrane segment spans residues 373 to 393 (MVALGMMNVVGSMSSCYVATG). The Extracellular segment spans residues 394–409 (SFSRSAVNFMAGCQTA). The helical transmembrane segment at 410 to 430 (VSNIIMSIVVLLTLLFLTPLF) threads the bilayer. The Cytoplasmic segment spans residues 431-438 (KYTPNAIL). The chain crosses the membrane as a helical span at residues 439–459 (AAIIINAVIPLIDIQAAILIF). Topologically, residues 460-466 (KVDKLDF) are extracellular. Residues 467–487 (IACIGAFFGVIFVSVEIGLLI) form a helical membrane-spanning segment. At 488–653 (AVSISFAKIL…ACCPKLSNEV (166 aa)) the chain is on the cytoplasmic side. Residues 522-645 (QYPEATMVPG…LTVADAVEAC (124 aa)) form the STAS domain.

This sequence belongs to the SLC26A/SulP transporter (TC 2.A.53.1) family. In terms of assembly, homodimer. Interacts with OASA1 through its STAS domain. Expressed in lateral root cap, root hairs, epidermal and cortical cells of roots.

The protein localises to the cell membrane. Its activity is regulated as follows. Interaction with OASA1 negatively impacts the transporter activity. High-affinity H(+)/sulfate cotransporter that mediates the uptake of the environmental sulfate by plant roots. Plays a central role in the regulation of sulfate assimilation. Unable to transport molybdate. This is Sulfate transporter 1.2 (SULTR1;2) from Arabidopsis thaliana (Mouse-ear cress).